A 311-amino-acid chain; its full sequence is Immune-associated nucleotide-binding protein 7 (311 aa).

The 209-residue stretch at Lys-14–Lys-222 folds into the AIG1-type G domain. The tract at residues Gly-23–Ser-30 is G1. Residues Gly-23–Ala-31 and Ser-44 contribute to the GTP site. Positions Gly-50–Lys-54 are G2. The segment at Asp-72–Gly-75 is G3. The G4 stretch occupies residues Thr-142 to Asp-145. The interval Asp-181–Lys-183 is G5. GTP is bound at residue Asn-182. Residues Tyr-218–Ala-295 are a coiled coil.

This sequence belongs to the TRAFAC class TrmE-Era-EngA-EngB-Septin-like GTPase superfamily. AIG1/Toc34/Toc159-like paraseptin GTPase family. IAN subfamily. As to expression, ubiquitous.

This is Immune-associated nucleotide-binding protein 7 from Arabidopsis thaliana (Mouse-ear cress).